The chain runs to 375 residues: tRNA-specific 2-thiouridylase MnmA (375 aa).

Residues 12 to 19 (GMSGGVDS) and Met-38 each bind ATP. Residues 98–100 (NPD) are interaction with target base in tRNA. Cys-103 functions as the Nucleophile in the catalytic mechanism. A disulfide bridge connects residues Cys-103 and Cys-200. Gly-127 contacts ATP. The interval 150–152 (KDQ) is interaction with tRNA. Catalysis depends on Cys-200, which acts as the Cysteine persulfide intermediate. Residues 312 to 313 (RY) are interaction with tRNA.

Belongs to the MnmA/TRMU family.

The protein resides in the cytoplasm. It carries out the reaction S-sulfanyl-L-cysteinyl-[protein] + uridine(34) in tRNA + AH2 + ATP = 2-thiouridine(34) in tRNA + L-cysteinyl-[protein] + A + AMP + diphosphate + H(+). Its function is as follows. Catalyzes the 2-thiolation of uridine at the wobble position (U34) of tRNA, leading to the formation of s(2)U34. This chain is tRNA-specific 2-thiouridylase MnmA, found in Lactobacillus delbrueckii subsp. bulgaricus (strain ATCC 11842 / DSM 20081 / BCRC 10696 / JCM 1002 / NBRC 13953 / NCIMB 11778 / NCTC 12712 / WDCM 00102 / Lb 14).